We begin with the raw amino-acid sequence, 269 residues long: NAD kinase (269 aa).

D45 serves as the catalytic Proton acceptor. NAD(+) contacts are provided by residues 45-46 (DG), 122-123 (NE), R149, D151, and A186.

Belongs to the NAD kinase family. Requires a divalent metal cation as cofactor.

The protein resides in the cytoplasm. The enzyme catalyses NAD(+) + ATP = ADP + NADP(+) + H(+). Its function is as follows. Involved in the regulation of the intracellular balance of NAD and NADP, and is a key enzyme in the biosynthesis of NADP. Catalyzes specifically the phosphorylation on 2'-hydroxyl of the adenosine moiety of NAD to yield NADP. The sequence is that of NAD kinase from Staphylococcus haemolyticus (strain JCSC1435).